A 347-amino-acid polypeptide reads, in one-letter code: Protein pelota homolog (347 aa).

The protein belongs to the eukaryotic release factor 1 family. Pelota subfamily. In terms of assembly, monomer. A divalent metal cation serves as cofactor.

It is found in the cytoplasm. May function in recognizing stalled ribosomes, interact with stem-loop structures in stalled mRNA molecules, and effect endonucleolytic cleavage of the mRNA. May play a role in the release non-functional ribosomes and degradation of damaged mRNAs. Has endoribonuclease activity. This Methanocaldococcus jannaschii (strain ATCC 43067 / DSM 2661 / JAL-1 / JCM 10045 / NBRC 100440) (Methanococcus jannaschii) protein is Protein pelota homolog.